The following is a 43-amino-acid chain: S-layer protein 1 (43 aa).

It localises to the secreted. It is found in the cell wall. Its subcellular location is the S-layer. Its function is as follows. The S-layer is a paracrystalline mono-layered assembly of proteins which coat the surface of bacteria. This chain is S-layer protein 1, found in Bacillus thuringiensis subsp. konkukian.